Reading from the N-terminus, the 159-residue chain is Transcriptional repressor NrdR (159 aa).

Residues 3–34 (CPFCRHDDTQVVDSRVSEDGAAIRRRRRCSAC) fold into a zinc finger. One can recognise an ATP-cone domain in the interval 49-139 (PAVVKKDGSR…VYRRFEDVSE (91 aa)).

The protein belongs to the NrdR family. The cofactor is Zn(2+).

Negatively regulates transcription of bacterial ribonucleotide reductase nrd genes and operons by binding to NrdR-boxes. The polypeptide is Transcriptional repressor NrdR (Burkholderia thailandensis (strain ATCC 700388 / DSM 13276 / CCUG 48851 / CIP 106301 / E264)).